Here is a 361-residue protein sequence, read N- to C-terminus: DNA replication and repair protein RecF (361 aa).

30-37 contacts ATP; it reads GPNGSGKT.

The protein belongs to the RecF family.

The protein resides in the cytoplasm. Functionally, the RecF protein is involved in DNA metabolism; it is required for DNA replication and normal SOS inducibility. RecF binds preferentially to single-stranded, linear DNA. It also seems to bind ATP. The protein is DNA replication and repair protein RecF of Yersinia pseudotuberculosis serotype O:1b (strain IP 31758).